Here is a 208-residue protein sequence, read N- to C-terminus: Ubiquinone biosynthesis protein COQ4 homolog, mitochondrial (208 aa).

Residues H105, D106, H109, and E122 each coordinate Zn(2+).

This sequence belongs to the COQ4 family. In terms of assembly, component of a multi-subunit COQ enzyme complex. It depends on Zn(2+) as a cofactor.

It localises to the mitochondrion inner membrane. It carries out the reaction a 4-hydroxy-3-methoxy-5-(all-trans-polyprenyl)benzoate + H(+) = a 2-methoxy-6-(all-trans-polyprenyl)phenol + CO2. The protein operates within cofactor biosynthesis; ubiquinone biosynthesis. Its function is as follows. Lyase that catalyzes the C1-decarboxylation of 4-hydroxy-3-methoxy-5-(all-trans-polyprenyl)benzoic acid into 2-methoxy-6-(all-trans-polyprenyl)phenol during ubiquinone biosynthesis. In Nematostella vectensis (Starlet sea anemone), this protein is Ubiquinone biosynthesis protein COQ4 homolog, mitochondrial.